A 230-amino-acid chain; its full sequence is C-reactive protein (230 aa).

The signal sequence occupies residues 1–19; it reads MEKLLWCLLITISFSQAFG. The region spanning 24 to 223 is the Pentraxin (PTX) domain; sequence SKQAFVFPGV…DVFIKPQLWP (200 aa). The cysteines at positions 55 and 114 are disulfide-linked. N78 is a binding site for Ca(2+). The N-linked (GlcNAc...) asparagine glycan is linked to N147. The Ca(2+) site is built by E155, Q156, D157, and Q167. C227 and C228 form a disulfide bridge.

Belongs to the pentraxin family. Homopentamer; disulfide-linked. Pentraxin (or pentaxin) have a discoid arrangement of 5 non-covalently bound subunits. Two of the five chains form a dimer linked by two interchain disulfide bonds located in the C-terminal heptapeptide and specific to rat CRP. Interacts with FCN1; may regulate monocyte activation by FCN1. Ca(2+) is required as a cofactor. Post-translationally, the last two cysteines are involved either in interchain disulfide bonds or in an intrachain bond. Found in plasma.

Its subcellular location is the secreted. In terms of biological role, displays several functions associated with host defense: it promotes agglutination, bacterial capsular swelling, phagocytosis and complement fixation through its calcium-dependent binding to phosphorylcholine. Can interact with DNA and histones and may scavenge nuclear material released from damaged circulating cells. In Rattus norvegicus (Rat), this protein is C-reactive protein (Crp).